Consider the following 412-residue polypeptide: Proteasome-activating nucleotidase (412 aa).

Positions 18 to 72 (YRYLVDRVAGMESQNQELKEQIRQLESDKRYIETQKIRYEREVRKLKSEIEHLKT) form a coiled coil. ATP-binding positions include 197–202 (GTGKTL) and histidine 336. The interval 410-412 (MFA) is docks into pockets in the proteasome alpha-ring to cause gate opening.

The protein belongs to the AAA ATPase family. Homohexamer. The hexameric complex has a two-ring architecture resembling a top hat that caps the 20S proteasome core at one or both ends. Upon ATP-binding, the C-terminus of PAN interacts with the alpha-rings of the proteasome core by binding to the intersubunit pockets.

It is found in the cytoplasm. Its function is as follows. ATPase which is responsible for recognizing, binding, unfolding and translocation of substrate proteins into the archaeal 20S proteasome core particle. Is essential for opening the gate of the 20S proteasome via an interaction with its C-terminus, thereby allowing substrate entry and access to the site of proteolysis. Thus, the C-termini of the proteasomal ATPase function like a 'key in a lock' to induce gate opening and therefore regulate proteolysis. Unfolding activity requires energy from ATP hydrolysis, whereas ATP binding alone promotes ATPase-20S proteasome association which triggers gate opening, and supports translocation of unfolded substrates. The chain is Proteasome-activating nucleotidase from Methanospirillum hungatei JF-1 (strain ATCC 27890 / DSM 864 / NBRC 100397 / JF-1).